The sequence spans 210 residues: Phosphate propanoyltransferase (210 aa).

26–28 is a binding site for CoA; sequence VSN. Zn(2+) is bound by residues His-30 and His-32. CoA contacts are provided by Lys-71 and Arg-78. Arg-84 is a phosphate binding site. Zn(2+) contacts are provided by Glu-90, His-138, His-140, and His-186. Residue Asn-193 participates in CoA binding.

The protein belongs to the PduL family. In terms of assembly, monomer, when purified in the absence of the encapsulation peptide (EP, residues 1-27). The EP may influence oligomerization. The cofactor is Zn(2+).

The protein localises to the bacterial microcompartment. The catalysed reaction is propanoyl-CoA + phosphate = propanoyl phosphate + CoA. Its pathway is polyol metabolism; 1,2-propanediol degradation. Its function is as follows. Involved in 1,2-propanediol (1,2-PD) utilization in the bacterial microcompartment (BMC) dedicated to 1,2-PD degradation by catalyzing the conversion of propanoyl-CoA to propanoyl-phosphate. Also able to catalyze the reverse reaction. Also has phosphate acetyltransferase activity to a lesser extent. Required for optimal growth on 1,2-PD when the BMC is intact. CoA is regenerated within the BMC (for use by PduP) via this enzyme, although there must also be cofactor transport across the BMC. Directly targeted to the BMC. In terms of biological role, the 1,2-PD-specific bacterial microcompartment (BMC) concentrates low levels of 1,2-PD catabolic enzymes, concentrates volatile reaction intermediates thus enhancing pathway flux and keeps the level of toxic, mutagenic propionaldehyde low. The protein is Phosphate propanoyltransferase of Salmonella typhimurium (strain LT2 / SGSC1412 / ATCC 700720).